Here is a 567-residue protein sequence, read N- to C-terminus: Urease subunit alpha (567 aa).

Residues 129 to 567 (GGIDSHIHFI…LPMAQRYFLF (439 aa)) form the Urease domain. The Ni(2+) site is built by His-134, His-136, and Lys-217. Lys-217 bears the N6-carboxylysine mark. His-219 contacts substrate. Residues His-246 and His-272 each coordinate Ni(2+). The active-site Proton donor is the His-320. Asp-360 provides a ligand contact to Ni(2+).

It belongs to the metallo-dependent hydrolases superfamily. Urease alpha subunit family. As to quaternary structure, heterotrimer of UreA (gamma), UreB (beta) and UreC (alpha) subunits. Three heterotrimers associate to form the active enzyme. The cofactor is Ni cation. Carboxylation allows a single lysine to coordinate two nickel ions.

The protein localises to the cytoplasm. The catalysed reaction is urea + 2 H2O + H(+) = hydrogencarbonate + 2 NH4(+). It functions in the pathway nitrogen metabolism; urea degradation; CO(2) and NH(3) from urea (urease route): step 1/1. The polypeptide is Urease subunit alpha (Tolumonas auensis (strain DSM 9187 / NBRC 110442 / TA 4)).